The sequence spans 256 residues: Late embryogenesis abundant protein 32 (256 aa).

The segment covering methionine 1–lysine 14 has biased composition (basic and acidic residues). Residues methionine 1 to glutamate 20 form a disordered region. The Nuclear localization signal (NLS) signature appears at glutamine 5–proline 9. SMP domains are found at residues valine 13–isoleucine 66, isoleucine 130–threonine 187, and isoleucine 195–arginine 253.

This sequence belongs to the LEA type SMP family. In terms of tissue distribution, embryo specific, only in dry mature seeds. Expressed at low levels.

It localises to the cytoplasm. It is found in the nucleus. Functionally, LEA proteins are late embryonic proteins abundant in higher plant seed embryos. The function of those proteins is not known. The polypeptide is Late embryogenesis abundant protein 32 (Arabidopsis thaliana (Mouse-ear cress)).